The chain runs to 456 residues: Bifunctional protein GlmU (456 aa).

A pyrophosphorylase region spans residues 1 to 229; the sequence is MYNCAIILAA…FEETMGVNSR (229 aa). UDP-N-acetyl-alpha-D-glucosamine is bound by residues 8–11, K22, Q73, and 78–79; these read LAAG and GT. D103 contacts Mg(2+). UDP-N-acetyl-alpha-D-glucosamine is bound by residues G140, E155, N170, and N227. N227 lines the Mg(2+) pocket. The tract at residues 230 to 250 is linker; sequence VQLAEAEKIMRNRINKIHMEN. An N-acetyltransferase region spans residues 251 to 456; it reads GVTLIDHNNT…SWVYKKGLKK (206 aa). UDP-N-acetyl-alpha-D-glucosamine is bound by residues R332 and K350. H362 (proton acceptor) is an active-site residue. UDP-N-acetyl-alpha-D-glucosamine-binding residues include Y365 and N376. Residues 385-386, A422, and R439 contribute to the acetyl-CoA site; that span reads NY.

This sequence in the N-terminal section; belongs to the N-acetylglucosamine-1-phosphate uridyltransferase family. The protein in the C-terminal section; belongs to the transferase hexapeptide repeat family. As to quaternary structure, homotrimer. Mg(2+) serves as cofactor.

The protein localises to the cytoplasm. It catalyses the reaction alpha-D-glucosamine 1-phosphate + acetyl-CoA = N-acetyl-alpha-D-glucosamine 1-phosphate + CoA + H(+). It carries out the reaction N-acetyl-alpha-D-glucosamine 1-phosphate + UTP + H(+) = UDP-N-acetyl-alpha-D-glucosamine + diphosphate. It functions in the pathway nucleotide-sugar biosynthesis; UDP-N-acetyl-alpha-D-glucosamine biosynthesis; N-acetyl-alpha-D-glucosamine 1-phosphate from alpha-D-glucosamine 6-phosphate (route II): step 2/2. Its pathway is nucleotide-sugar biosynthesis; UDP-N-acetyl-alpha-D-glucosamine biosynthesis; UDP-N-acetyl-alpha-D-glucosamine from N-acetyl-alpha-D-glucosamine 1-phosphate: step 1/1. It participates in bacterial outer membrane biogenesis; LPS lipid A biosynthesis. Functionally, catalyzes the last two sequential reactions in the de novo biosynthetic pathway for UDP-N-acetylglucosamine (UDP-GlcNAc). The C-terminal domain catalyzes the transfer of acetyl group from acetyl coenzyme A to glucosamine-1-phosphate (GlcN-1-P) to produce N-acetylglucosamine-1-phosphate (GlcNAc-1-P), which is converted into UDP-GlcNAc by the transfer of uridine 5-monophosphate (from uridine 5-triphosphate), a reaction catalyzed by the N-terminal domain. The polypeptide is Bifunctional protein GlmU (Clostridium kluyveri (strain NBRC 12016)).